A 111-amino-acid chain; its full sequence is UPF0145 protein BTH_I2656 (111 aa).

This sequence belongs to the UPF0145 family.

In Burkholderia thailandensis (strain ATCC 700388 / DSM 13276 / CCUG 48851 / CIP 106301 / E264), this protein is UPF0145 protein BTH_I2656.